The following is a 268-amino-acid chain: Interleukin-2 receptor subunit alpha (268 aa).

Residues 1-21 (MEPRLLMLGFLSLTIVPSCRA) form the signal peptide. The 58-residue stretch at 22-79 (ELCLYDPPEVPNATFKALSYKNGTILNCECKRGFRRLKELVYMRCLGNSWSSNCQCTS) folds into the Sushi 1 domain. Residues 22–236 (ELCLYDPPEV…ETFVLTMEYK (215 aa)) lie on the Extracellular side of the membrane. Intrachain disulfides connect Cys24-Cys66, Cys49-Cys75, and Cys51-Cys77. 2 N-linked (GlcNAc...) asparagine glycosylation sites follow: Asn33 and Asn43. A disordered region spans residues 86–109 (RKQVTAQLEHQKEQQTTTDMQKPT). Residues 88–109 (QVTAQLEHQKEQQTTTDMQKPT) show a composition bias toward polar residues. N-linked (GlcNAc...) asparagine glycosylation is present at Asn116. In terms of domain architecture, Sushi 2 spans 119 to 182 (GHCREPPPWK…WTQPQLTCVD (64 aa)). Disulfide bonds link Cys121/Cys164 and Cys148/Cys180. The segment at 189-219 (FLASEESQGSRNSSPESETSCPITTTDFPQP) is disordered. The segment covering 193-211 (EESQGSRNSSPESETSCPI) has biased composition (polar residues). A helical transmembrane segment spans residues 237–257 (VAVASCLFLLISILLLSGLTW). The Cytoplasmic segment spans residues 258-268 (QHRWRKSRRTI).

In terms of assembly, non-covalent dimer of an alpha and a beta subunit. IL2R exists in 3 different forms: a high affinity dimer, an intermediate affinity monomer (beta subunit), and a low affinity monomer (alpha subunit). The high and intermediate affinity forms also associate with a gamma subunit.

The protein localises to the membrane. Its function is as follows. Receptor for interleukin-2. The receptor is involved in the regulation of immune tolerance by controlling regulatory T cells (TREGs) activity. TREGs suppress the activation and expansion of autoreactive T-cells. This is Interleukin-2 receptor subunit alpha (Il2ra) from Mus musculus (Mouse).